Reading from the N-terminus, the 346-residue chain is S-adenosylmethionine:tRNA ribosyltransferase-isomerase (346 aa).

This sequence belongs to the QueA family. In terms of assembly, monomer.

The protein localises to the cytoplasm. The catalysed reaction is 7-aminomethyl-7-carbaguanosine(34) in tRNA + S-adenosyl-L-methionine = epoxyqueuosine(34) in tRNA + adenine + L-methionine + 2 H(+). The protein operates within tRNA modification; tRNA-queuosine biosynthesis. Transfers and isomerizes the ribose moiety from AdoMet to the 7-aminomethyl group of 7-deazaguanine (preQ1-tRNA) to give epoxyqueuosine (oQ-tRNA). The polypeptide is S-adenosylmethionine:tRNA ribosyltransferase-isomerase (Lactococcus lactis subsp. cremoris (strain MG1363)).